Here is a 367-residue protein sequence, read N- to C-terminus: D-alanine--D-alanine ligase (367 aa).

Residues 145–351 form the ATP-grasp domain; the sequence is KRLLRDAGLP…QPALMDALIA (207 aa). An ATP-binding site is contributed by 174–229; sequence HAVGCSELFIKPANLGSSVGISKARTPQEFAAACDLALRFDGKILIERCISPVREI. The Mg(2+) site is built by D306, E318, and N320.

It belongs to the D-alanine--D-alanine ligase family. Requires Mg(2+) as cofactor. Mn(2+) is required as a cofactor.

It is found in the cytoplasm. The catalysed reaction is 2 D-alanine + ATP = D-alanyl-D-alanine + ADP + phosphate + H(+). It functions in the pathway cell wall biogenesis; peptidoglycan biosynthesis. Cell wall formation. The sequence is that of D-alanine--D-alanine ligase from Bradyrhizobium sp. (strain BTAi1 / ATCC BAA-1182).